The following is a 358-amino-acid chain: Trace amine-associated receptor 7b (358 aa).

The Extracellular portion of the chain corresponds to 1 to 47; sequence MATDDDRFPWDQDSILSRDLLSASSMQLCYEKLNRSCVRSPYSPGPR. Residue Asn34 is glycosylated (N-linked (GlcNAc...) asparagine). 2 disulfide bridges follow: Cys37/Cys201 and Cys120/Cys205. Residues 48-68 traverse the membrane as a helical segment; sequence LILYAVFGFGAVLAVCGNLLV. The Cytoplasmic segment spans residues 69–83; sequence MTSILHFRQLHSPAN. The chain crosses the membrane as a helical span at residues 84–104; sequence FLVASLACADFLVGLTVMPFS. At 105–125 the chain is on the extracellular side; the sequence is MVRSVEGCWYFGDIYCKFHSS. A helical transmembrane segment spans residues 126-147; the sequence is FDGSFCYSSIFHLCFISADRYI. Residues 148 to 166 lie on the Cytoplasmic side of the membrane; the sequence is AVSDPLIYPTRFTASVSGK. Residues 167–187 traverse the membrane as a helical segment; the sequence is CITFSWLLSIIYSFSLFYTGV. Residues 188 to 211 are Extracellular-facing; the sequence is NEAGLEDLVSALTCVGGCQIAVNQ. An N-linked (GlcNAc...) asparagine glycan is attached at Asn210. A helical transmembrane segment spans residues 212-232; sequence SWVFINFLLFLVPALVMMTVY. Over 233-274 the chain is Cytoplasmic; that stretch reads SKIFLIAKQQAQNIEKMGKQTARASESYKDRVAKRERKAAKT. The helical transmembrane segment at 275–295 threads the bilayer; the sequence is LGIAVAAFLLSWLPYFIDSII. Topologically, residues 296-309 are extracellular; sequence DAFLGFVTPTYVYE. The chain crosses the membrane as a helical span at residues 310–332; sequence ILVWIGYYNSAMNPLIYAFFYPW. At 333 to 358 the chain is on the cytoplasmic side; the sequence is FRKAIKLIVTGKILRENSSATNLFPE.

It belongs to the G-protein coupled receptor 1 family.

The protein localises to the cell membrane. In terms of biological role, olfactory receptor specific for N,N-dimethylalkylamines trace amines, such as N,N-dimethylcyclohexylamine. Trace amine compounds are enriched in animal body fluids and act on trace amine-associated receptors (TAARs) to elicit both intraspecific and interspecific innate behaviors. Ligand-binding causes a conformation change that triggers signaling via G(s)-class of G alpha proteins (GNAL or GNAS). The protein is Trace amine-associated receptor 7b of Rattus norvegicus (Rat).